The sequence spans 882 residues: Valine--tRNA ligase (882 aa).

Residues 52–62 (PNVTGSLHMGH) carry the 'HIGH' region motif. Residues 539-543 (KMSKS) carry the 'KMSKS' region motif. ATP is bound at residue lysine 542. The stretch at 816–882 (IDVAAERRRL…RINARLAVLQ (67 aa)) forms a coiled coil.

It belongs to the class-I aminoacyl-tRNA synthetase family. ValS type 1 subfamily. Monomer.

Its subcellular location is the cytoplasm. It carries out the reaction tRNA(Val) + L-valine + ATP = L-valyl-tRNA(Val) + AMP + diphosphate. Its function is as follows. Catalyzes the attachment of valine to tRNA(Val). As ValRS can inadvertently accommodate and process structurally similar amino acids such as threonine, to avoid such errors, it has a 'posttransfer' editing activity that hydrolyzes mischarged Thr-tRNA(Val) in a tRNA-dependent manner. The protein is Valine--tRNA ligase of Mycolicibacterium paratuberculosis (strain ATCC BAA-968 / K-10) (Mycobacterium paratuberculosis).